Consider the following 90-residue polypeptide: uncharacterized protein (90 aa).

The segment at 1-26 (MFKRSVSRLFCAPAPAPAPRKQPGGR) is disordered. A coiled-coil region spans residues 33–66 (NLNQSVKKQLNHLEVLERIKKQRKEQKNNRNQVD).

This is an uncharacterized protein from Dictyostelium discoideum (Social amoeba).